Reading from the N-terminus, the 308-residue chain is Acetaldehyde dehydrogenase (308 aa).

25 to 28 contributes to the NAD(+) binding site; the sequence is TGAI. The Acyl-thioester intermediate role is filled by cysteine 139. NAD(+) is bound at residue asparagine 279.

Belongs to the acetaldehyde dehydrogenase family.

It catalyses the reaction acetaldehyde + NAD(+) + CoA = acetyl-CoA + NADH + H(+). The chain is Acetaldehyde dehydrogenase from Streptomyces griseus subsp. griseus (strain JCM 4626 / CBS 651.72 / NBRC 13350 / KCC S-0626 / ISP 5235).